The chain runs to 857 residues: RNA-directed RNA polymerase 2a (857 aa).

Residues 511–624 (KYCLEIDLSK…FSQLPPVGDS (114 aa)) form the RdRp catalytic domain. Residues 775–857 (RKKHGIERRC…PCERGEGTRA (83 aa)) are disordered. Composition is skewed to polar residues over residues 804–816 (KVSQ…TRSQ) and 824–840 (FKSQ…SGRS).

The protein belongs to the ssRNA positive-strand viruses RNA-directed RNA polymerase family. As to quaternary structure, interacts with replication protein 1a.

It catalyses the reaction RNA(n) + a ribonucleoside 5'-triphosphate = RNA(n+1) + diphosphate. Its function is as follows. RNA-dependent RNA polymerase which replicates the viral genome composed of 3 RNA segments, RNA1, RNA2 and RNA3. This Cucumber mosaic virus (strain B) (CMV) protein is RNA-directed RNA polymerase 2a.